The sequence spans 235 residues: Glial cell line-derived neurotrophic factor (235 aa).

Residues 1 to 19 form the signal peptide; sequence MKLWDILATCLLLLSSVST. The propeptide occupies 20–87; sequence RPLFHKLQPS…DFIEATLGRL (68 aa). 2 disordered regions span residues 34–60 and 91–137; these read VRSE…ASME and SDVE…RVKG. Basic residues predominate over residues 119 to 128; it reads GERKRSRGRA. 3 cysteine pairs are disulfide-bonded: Cys-142/Cys-203, Cys-169/Cys-232, and Cys-173/Cys-234. N-linked (GlcNAc...) asparagine glycosylation is found at Asn-150 and Asn-186.

This sequence belongs to the TGF-beta family. GDNF subfamily. In terms of assembly, homodimer; disulfide-linked. Interacts with GFRA1 coreceptor and RET: forms a 2:2:2 ternary complex composed of GDNF ligand, GFRA1 and RET receptor. In terms of tissue distribution, first expressed at 14 hours post-fertilization (hpf) in the ventral half of anterior somites and in intermediate mesoderm. Ventral somitic expression persists and extends more posteriorly over the next 12 hours. Expressed throughout the ventral trunk mesoderm and endoderm at 24 hpf. By 30 hpf, somitic expression ceases and by 36 hpf, expression becomes restricted to the endodermal cells forming the gut, with expression along the whole length of the developing gut tube at 72 hpf.

The protein localises to the secreted. Its function is as follows. Neurotrophic factor that enhances survival and morphological differentiation of dopaminergic neurons and increases their high-affinity dopamine uptake. Acts by binding to its coreceptor, GFRA1, leading to autophosphorylation and activation of the RET receptor. The sequence is that of Glial cell line-derived neurotrophic factor from Danio rerio (Zebrafish).